Consider the following 84-residue polypeptide: Putative defensin-like protein 38 (84 aa).

The first 26 residues, 1-26 (MASSKNGTVLFVSLMILLLISTGVKA), serve as a signal peptide directing secretion. Intrachain disulfides connect Cys28–Cys84, Cys41–Cys65, Cys50–Cys76, and Cys54–Cys78.

This sequence belongs to the DEFL family.

It is found in the secreted. This chain is Putative defensin-like protein 38, found in Arabidopsis thaliana (Mouse-ear cress).